Here is a 477-residue protein sequence, read N- to C-terminus: Bifunctional protein HldE (477 aa).

Residues 1–319 are ribokinase; it reads MKITLPPFDQ…RALQEQEQSG (319 aa). Residue 195 to 198 participates in ATP binding; the sequence is NLAE. Asp264 is an active-site residue. The tract at residues 344 to 477 is cytidylyltransferase; sequence MTNGCFDLLH…IERMQSAPDT (134 aa).

The protein in the N-terminal section; belongs to the carbohydrate kinase PfkB family. It in the C-terminal section; belongs to the cytidylyltransferase family. In terms of assembly, homodimer.

It carries out the reaction D-glycero-beta-D-manno-heptose 7-phosphate + ATP = D-glycero-beta-D-manno-heptose 1,7-bisphosphate + ADP + H(+). It catalyses the reaction D-glycero-beta-D-manno-heptose 1-phosphate + ATP + H(+) = ADP-D-glycero-beta-D-manno-heptose + diphosphate. Its pathway is nucleotide-sugar biosynthesis; ADP-L-glycero-beta-D-manno-heptose biosynthesis; ADP-L-glycero-beta-D-manno-heptose from D-glycero-beta-D-manno-heptose 7-phosphate: step 1/4. The protein operates within nucleotide-sugar biosynthesis; ADP-L-glycero-beta-D-manno-heptose biosynthesis; ADP-L-glycero-beta-D-manno-heptose from D-glycero-beta-D-manno-heptose 7-phosphate: step 3/4. Functionally, catalyzes the phosphorylation of D-glycero-D-manno-heptose 7-phosphate at the C-1 position to selectively form D-glycero-beta-D-manno-heptose-1,7-bisphosphate. Catalyzes the ADP transfer from ATP to D-glycero-beta-D-manno-heptose 1-phosphate, yielding ADP-D-glycero-beta-D-manno-heptose. The chain is Bifunctional protein HldE from Alkalilimnicola ehrlichii (strain ATCC BAA-1101 / DSM 17681 / MLHE-1).